The primary structure comprises 240 residues: UDP-2,3-diacylglucosamine hydrolase (240 aa).

D8, H10, D41, N79, and H114 together coordinate Mn(2+). Residue 79-80 (NR) coordinates substrate. The substrate site is built by D122, S160, N164, K167, and H195. Mn(2+) contacts are provided by H195 and H197.

This sequence belongs to the LpxH family. The cofactor is Mn(2+).

It is found in the cell inner membrane. It carries out the reaction UDP-2-N,3-O-bis[(3R)-3-hydroxytetradecanoyl]-alpha-D-glucosamine + H2O = 2-N,3-O-bis[(3R)-3-hydroxytetradecanoyl]-alpha-D-glucosaminyl 1-phosphate + UMP + 2 H(+). It participates in glycolipid biosynthesis; lipid IV(A) biosynthesis; lipid IV(A) from (3R)-3-hydroxytetradecanoyl-[acyl-carrier-protein] and UDP-N-acetyl-alpha-D-glucosamine: step 4/6. Its function is as follows. Hydrolyzes the pyrophosphate bond of UDP-2,3-diacylglucosamine to yield 2,3-diacylglucosamine 1-phosphate (lipid X) and UMP by catalyzing the attack of water at the alpha-P atom. Involved in the biosynthesis of lipid A, a phosphorylated glycolipid that anchors the lipopolysaccharide to the outer membrane of the cell. This is UDP-2,3-diacylglucosamine hydrolase from Salmonella schwarzengrund (strain CVM19633).